The following is an 89-amino-acid chain: Elongation factor 1-beta (89 aa).

This sequence belongs to the EF-1-beta/EF-1-delta family.

Promotes the exchange of GDP for GTP in EF-1-alpha/GDP, thus allowing the regeneration of EF-1-alpha/GTP that could then be used to form the ternary complex EF-1-alpha/GTP/AAtRNA. This is Elongation factor 1-beta (ef1b) from Methanothermobacter thermautotrophicus (strain ATCC 29096 / DSM 1053 / JCM 10044 / NBRC 100330 / Delta H) (Methanobacterium thermoautotrophicum).